Here is a 195-residue protein sequence, read N- to C-terminus: Probable nicotinate-nucleotide adenylyltransferase (195 aa).

The protein belongs to the NadD family.

It carries out the reaction nicotinate beta-D-ribonucleotide + ATP + H(+) = deamido-NAD(+) + diphosphate. It participates in cofactor biosynthesis; NAD(+) biosynthesis; deamido-NAD(+) from nicotinate D-ribonucleotide: step 1/1. Its function is as follows. Catalyzes the reversible adenylation of nicotinate mononucleotide (NaMN) to nicotinic acid adenine dinucleotide (NaAD). The protein is Probable nicotinate-nucleotide adenylyltransferase of Mesorhizobium japonicum (strain LMG 29417 / CECT 9101 / MAFF 303099) (Mesorhizobium loti (strain MAFF 303099)).